The following is a 245-amino-acid chain: TLC domain-containing protein 5 (245 aa).

Transmembrane regions (helical) follow at residues 1-21 (MALA…SLYI), 38-58 (LVTF…GFID), 75-95 (VHVL…CVYF), 99-119 (GALM…ALVL), 162-182 (FLFV…LLFC), and 191-211 (WFVK…MFSI). A TLC domain is found at 29–204 (HRSYEWSCRL…AGGVAMYAVS (176 aa)).

It belongs to the TLCD5 family.

It is found in the membrane. This is TLC domain-containing protein 5 from Homo sapiens (Human).